The following is a 2344-amino-acid chain: Genome polyprotein (2344 aa).

Residues 492–653 (QKVISDLHTM…ESWQATRHGS (162 aa)) form the SF3 helicase domain. ATP is bound at residue 522 to 529 (GAPGIGKT). An O-(5'-phospho-RNA)-tyrosine modification is found at tyrosine 1014. Tyrosine 1014 is subject to O-UMP-tyrosine; transient. Residues 1109-1244 (GLPGFMRHNG…SKMCTLIDLT (136 aa)) enclose the Peptidase C24 domain. Catalysis depends on for 3CLpro activity residues histidine 1135, aspartate 1152, and cysteine 1212. In terms of domain architecture, RdRp catalytic spans 1495-1619 (SDFLCLDYSK…AMTPMMVSLL (125 aa)). Cysteine 1584 and cysteine 1591 are disulfide-bonded. Positions 1771 to 1796 (RTAPQGEAAGTATTASVPGTTTDGMD) are disordered. The span at 1778–1794 (AAGTATTASVPGTTTDG) shows a compositional bias: low complexity.

Homodimer. In terms of assembly, homomultimer. Interacts with host type II histo-blood group structures antigens at the surface of target cells. The cofactor is Mn(2+). In terms of processing, specific enzymatic cleavages by its own cysteine protease yield mature proteins. The protease cleaves itself from the nascent polyprotein autocatalytically. Precursor p41 can be cleaved by viral 3CLpro into protein p19 and VPg, or cleaved by host protease into protein p23/2 and protein p18. VPg is uridylylated by the polymerase and is covalently attached to the 5'-end of the polyadenylated genomic and subgenomic RNAs. This uridylylated form acts as a nucleotide-peptide primer for the polymerase.

It localises to the host cytoplasm. It is found in the host endoplasmic reticulum. Its subcellular location is the virion. It catalyses the reaction a ribonucleoside 5'-triphosphate + H2O = a ribonucleoside 5'-diphosphate + phosphate + H(+). The catalysed reaction is Endopeptidase with a preference for cleavage when the P1 position is occupied by Glu-|-Xaa and the P1' position is occupied by Gly-|-Yaa.. The enzyme catalyses RNA(n) + a ribonucleoside 5'-triphosphate = RNA(n+1) + diphosphate. Functionally, together with NTPase and NS4, initiates the formation of the replication complex. Induces the proliferation of the host smooth ER membranes forming long tubular structures. These remodeled membranes probably form the viral factories that contain the replication complex. In terms of biological role, displays NTPase activity, but no helicase activity. Induces the formation of convoluted membranes derived from the host ER. These remodeled membranes probably form the viral factories that contain the replication complex. Together with NS2 and NS4, initiates the formation of the replication complex. Its function is as follows. Probable key protein responsible for the formation of membrane alterations by the virus. Induces the formation of convoluted membranes derived from the host ER. These remodeled membranes probably form the viral factories that contain the replication complex. Together with NS2 and NTPase, initiates the formation of the replication complex. Viral genome-linked protein is covalently linked to the 5'-end of the positive-strand, negative-strand genomic RNAs and subgenomic RNA. Acts as a genome-linked replication primer. May recruit ribosome to viral RNA thereby promoting viral proteins translation. Interacts with host translation initiation complex to allow the translation of viral proteins. Functionally, processes the polyprotein. 3CLpro-RdRp is first released by autocleavage, then all other proteins are cleaved. May cleave polyadenylate-binding protein thereby inhibiting cellular translation. In terms of biological role, replicates genomic and antigenomic RNA by recognizing replications specific signals. Also transcribes a subgenomic mRNA by initiating RNA synthesis internally on antigenomic RNA. This sgRNA codes for structural proteins. Catalyzes the covalent attachment VPg with viral RNAs. Its function is as follows. Capsid protein VP60 self assembles to form an icosahedral capsid with a T=3 symmetry, about 35 nm in diameter, and consisting of 180 capsid proteins. A smaller form of capsid with a diameter of 23 nm might be capsid proteins assembled as icosahedron with T=1 symmetry. The capsid encapsulate VP2 proteins and genomic or subgenomic RNA. Attaches virion to target cells by binding histo-blood group antigens, inducing endocytosis of the viral particle. Acidification of the endosome induces conformational change of capsid protein thereby injecting virus genomic RNA into host cytoplasm. The chain is Genome polyprotein from Oryctolagus cuniculus (Rabbit).